A 337-amino-acid polypeptide reads, in one-letter code: MVVKVGINGFGRIGRLALRRIQEVEGVEVAHINDLTDPAMLAHLLKYDTTQGRFKGTVEVKEDGFDVNGKFVKVTAERNPEDIQWADSGVEIVLEATGFFATKEKAEKHLHPGGAKKVLITAPGGNDVKTVVFNTNHTILDGTETVISAGSCTTNSLAPMADALNKNFGVKGGTMTTVHSYTGDQMTLDGPHRGGDFRRARAAAENIVPASSGAAKAIGLVLPELSGLMKGHAQRVSTPTGSITELVTVLEKHVTVDEINEAMKAAADESFGYNVDEIVSSDIIGMAYGSLFDATLTEVTDLKDGGQLVKTAAWYDNEMSFTAQLIRTLEYFAKIAK.

Residues 12–13 (RI), D34, R78, and T121 contribute to the NAD(+) site. D-glyceraldehyde 3-phosphate contacts are provided by residues 151 to 153 (SCT), T182, R199, 212 to 213 (SG), and R235. C152 serves as the catalytic Nucleophile. N317 contributes to the NAD(+) binding site.

The protein belongs to the glyceraldehyde-3-phosphate dehydrogenase family. In terms of assembly, homotetramer.

It is found in the cytoplasm. The enzyme catalyses D-glyceraldehyde 3-phosphate + phosphate + NAD(+) = (2R)-3-phospho-glyceroyl phosphate + NADH + H(+). Its pathway is carbohydrate degradation; glycolysis; pyruvate from D-glyceraldehyde 3-phosphate: step 1/5. Functionally, catalyzes the oxidative phosphorylation of glyceraldehyde 3-phosphate (G3P) to 1,3-bisphosphoglycerate (BPG) using the cofactor NAD. The first reaction step involves the formation of a hemiacetal intermediate between G3P and a cysteine residue, and this hemiacetal intermediate is then oxidized to a thioester, with concomitant reduction of NAD to NADH. The reduced NADH is then exchanged with the second NAD, and the thioester is attacked by a nucleophilic inorganic phosphate to produce BPG. The polypeptide is Glyceraldehyde-3-phosphate dehydrogenase (gap) (Lactococcus lactis subsp. lactis (strain IL1403) (Streptococcus lactis)).